A 129-amino-acid chain; its full sequence is Small ribosomal subunit protein uS11 (129 aa).

The protein belongs to the universal ribosomal protein uS11 family. As to quaternary structure, part of the 30S ribosomal subunit. Interacts with proteins S7 and S18. Binds to IF-3.

Located on the platform of the 30S subunit, it bridges several disparate RNA helices of the 16S rRNA. Forms part of the Shine-Dalgarno cleft in the 70S ribosome. This chain is Small ribosomal subunit protein uS11, found in Phenylobacterium zucineum (strain HLK1).